The sequence spans 797 residues: Short transient receptor potential channel 4-associated protein (797 aa).

N-acetylalanine is present on A2. Residues A2–M400 form an interaction with TNFRSF1A region.

Component of the DCX(TRPC4AP) E3 ubiquitin ligase complex, at least composed of CUL4A, DDB1, TRPC4AP/TRUSS and RBX1. Interacts with MYC. Constitutively associated with TNFRSF1A. Directly interacts with TRADD, TRAF2, CHUK, IKBKB and IKBKG. Interacts with TRPC1, TRPC4 and TRPC5. As to quaternary structure, (Microbial infection) Interacts with Hepatitis B virus (HBV) protein X; leading to prevent ubiquitination of TRPC4AP by SKP2. Phosphorylated by GSK3B; phosphorylation is required for ubiquitination. Post-translationally, ubiquitinated by a SCF (SKP1-CUL1-F-box protein) E3 ubiquitin-protein ligase containing SKP2, leading to its degradation. Phosphorylation by GSK3B is required for ubiquitination.

Its subcellular location is the cytoplasm. It is found in the perinuclear region. Its pathway is protein modification; protein ubiquitination. In terms of biological role, substrate-recognition component of a DCX (DDB1-CUL4-X-box) E3 ubiquitin-protein ligase complex required for cell cycle control. The DCX(TRPC4AP) complex specifically mediates the polyubiquitination and subsequent degradation of MYC as part of the DesCEND (destruction via C-end degrons) pathway. The DesCEND (destruction via C-end degrons) pathway recognizes a C-degron located at the extreme C terminus of target proteins, leading to their ubiquitination and degradation. The DCX(TRPC4AP) complex specifically recognizes proteins with an arginine at the minus 3 position (R-3 motif) at the C-terminus, such as MYC, leading to their ubiquitination and degradation. Also participates in the activation of NFKB1 in response to ligation of TNFRSF1A, possibly by linking TNFRSF1A to the IKK signalosome. Involved in JNK activation via its interaction with TRAF2. Also involved in elevation of endoplasmic reticulum Ca(2+) storage reduction in response to CHRM1. This chain is Short transient receptor potential channel 4-associated protein, found in Homo sapiens (Human).